A 987-amino-acid polypeptide reads, in one-letter code: KAT8 regulatory NSL complex subunit 1-like protein (987 aa).

K134 is covalently cross-linked (Glycyl lysine isopeptide (Lys-Gly) (interchain with G-Cter in SUMO2)). A Phosphoserine modification is found at S462. Residues 708–738 (RKKRHLSETALGERTKLEESDFQHTESGSHS) are disordered. Positions 718–731 (LGERTKLEESDFQH) are enriched in basic and acidic residues. The region spanning 794-915 (EILTPSWRMV…QSQETKSLWW (122 aa)) is the PEHE domain. K859 bears the N6-acetyllysine mark. The segment at 949-972 (GEIFGTSVPENGHHPKKQSDGMEE) is disordered. The segment covering 959 to 972 (NGHHPKKQSDGMEE) has biased composition (basic and acidic residues).

Post-translationally, acetylated on lysine residues by KAT8 upon ionizing radiation-induced DNA damage; deacetylated by HDAC3.

The chain is KAT8 regulatory NSL complex subunit 1-like protein (KANSL1L) from Homo sapiens (Human).